We begin with the raw amino-acid sequence, 428 residues long: Protein clpf-1 (428 aa).

ATP is bound by residues Glu-16 and Arg-56. Residues 99-118 (KKREEQAVSNSSKPKGPRLL) form a disordered region. Residue 124 to 129 (DVGKTT) participates in ATP binding.

Belongs to the Clp1 family. Clp1 subfamily.

It localises to the nucleus. In terms of biological role, required for endonucleolytic cleavage during polyadenylation-dependent pre-mRNA 3'-end formation. This Caenorhabditis briggsae protein is Protein clpf-1.